Here is a 355-residue protein sequence, read N- to C-terminus: MSRSNPPNPTGSRKISFNVSEQYDIQDVVGEGAYGVVCSAIHKPSGQKVAIKKITPFDHSMFCLRTLREMKLLRYFNHENIISILDIQKPRNYESFNEVYLIQELMETDMHRAIRTQDLSDDHCQYFIYQTLRALKAMHSANVLHRDLKPSNLLLNANCDLKVCDFGLARSAASQEDNSGFMTEYVATRWYRAPEIMLTFKEYTKAIDVWSVGCILAEMLSGKPLFPGKDYHHQLTLILDVLGTPTMEDYYGIKSRRAREYIRSLPFKKKVPFRTLFPKTSDLALDLLEKLLAFNPVKRITVEEALKHPYLEPYHDPEDEPTAPPIPEEFFDFDKHKDNLSKEQLKQLIYQEIMR.

The Protein kinase domain maps to 23–311 (YDIQDVVGEG…VEEALKHPYL (289 aa)). ATP-binding positions include 29–37 (VGEGAYGVV) and K52. D147 serves as the catalytic Proton acceptor. T183 is modified (phosphothreonine). The TXY signature appears at 183–185 (TEY). Residue Y185 is modified to Phosphotyrosine.

It belongs to the protein kinase superfamily. CMGC Ser/Thr protein kinase family. MAP kinase subfamily. Post-translationally, dually phosphorylated on Thr-183 and Tyr-185, which activates the enzyme.

The protein localises to the nucleus. The enzyme catalyses L-seryl-[protein] + ATP = O-phospho-L-seryl-[protein] + ADP + H(+). The catalysed reaction is L-threonyl-[protein] + ATP = O-phospho-L-threonyl-[protein] + ADP + H(+). Activated by tyrosine and threonine phosphorylation. Functionally, responds to activation by environmental stress by phosphorylating downstream targets. This is Mitogen-activated protein kinase (MAPK) from Fusarium vanettenii (Neocosmospora pisi).